Here is a 242-residue protein sequence, read N- to C-terminus: Uridylate kinase (242 aa).

Residue 11–14 (KLSG) participates in ATP binding. Residues 19–24 (GNMGYG) are involved in allosteric activation by GTP. Glycine 53 contributes to the UMP binding site. ATP contacts are provided by glycine 54 and arginine 58. UMP contacts are provided by residues aspartate 73 and 134 to 141 (SGNPFFTT). Positions 161, 167, and 170 each coordinate ATP.

The protein belongs to the UMP kinase family. As to quaternary structure, homohexamer.

The protein localises to the cytoplasm. It catalyses the reaction UMP + ATP = UDP + ADP. It participates in pyrimidine metabolism; CTP biosynthesis via de novo pathway; UDP from UMP (UMPK route): step 1/1. Its activity is regulated as follows. Allosterically activated by GTP. Inhibited by UTP. Catalyzes the reversible phosphorylation of UMP to UDP. The chain is Uridylate kinase from Nostoc sp. (strain PCC 7120 / SAG 25.82 / UTEX 2576).